The sequence spans 325 residues: Malate dehydrogenase (325 aa).

11 to 17 (GAAGHVS) is a binding site for NAD(+). 2 residues coordinate substrate: arginine 92 and arginine 98. Residues asparagine 105, glutamine 112, and 129 to 131 (VGN) each bind NAD(+). Residues asparagine 131 and arginine 162 each coordinate substrate. Histidine 187 acts as the Proton acceptor in catalysis.

This sequence belongs to the LDH/MDH superfamily. MDH type 2 family.

It carries out the reaction (S)-malate + NAD(+) = oxaloacetate + NADH + H(+). In terms of biological role, catalyzes the reversible oxidation of malate to oxaloacetate. In Desulfotalea psychrophila (strain LSv54 / DSM 12343), this protein is Malate dehydrogenase.